Here is a 226-residue protein sequence, read N- to C-terminus: Lysosomal-associated transmembrane protein 4B (226 aa).

The next 4 helical transmembrane spans lie at 26–46 (ILLG…LLSA), 72–92 (MCIA…ATYG), 100–120 (WIIP…LVAI), and 153–173 (CLVL…GYLI). The interval 205–221 (PPYDDATVNGAAKEPPP) is required for NEDD4 interaction.

The protein belongs to the LAPTM4/LAPTM5 transporter family. Homooligomer; upon reaching the lysosomes. Interacts with MCOLN1. Interacts with NEDD4; may play a role in the lysosomal sorting of LAPTM4B; enhances HGS association with NEDD4; mediates inhibition of EGFR degradation. Interacts with PIP5K1C; promotes SNX5 association with LAPTM4B; kinase activity of PIP5K1C is required; interaction is regulated by phosphatidylinositol 4,5-bisphosphate generated by PIP5K1C. Interacts with HGS; promotes HGS ubiquitination. Interacts with SNX5. Interacts with SLC3A2 and SLC7A5; recruits SLC3A2 and SLC7A5 to lysosomes to promote leucine uptake into these organelles and is required for mTORC1 activation. Interacts with LRRC32; decreases TGFB1 production in regulatory T cells. Interacts with BECN1; competes with EGFR for LAPTM4B binding; regulates EGFR activity. Interacts with EGFR; positively correlates with EGFR activation. Post-translationally, undergoes proteolytic cleavage following delivery to the lysosomes. Ubiquitinated by NEDD4.

It localises to the endomembrane system. It is found in the late endosome membrane. The protein localises to the cell membrane. Its subcellular location is the cell projection. The protein resides in the lysosome membrane. It localises to the endosome membrane. It is found in the endosome. The protein localises to the multivesicular body membrane. Its subcellular location is the multivesicular body lumen. Its function is as follows. Required for optimal lysosomal function. Blocks EGF-stimulated EGFR intraluminal sorting and degradation. Conversely by binding with the phosphatidylinositol 4,5-bisphosphate, regulates its PIP5K1C interaction, inhibits HGS ubiquitination and relieves LAPTM4B inhibition of EGFR degradation. Recruits SLC3A2 and SLC7A5 (the Leu transporter) to the lysosome, promoting entry of leucine and other essential amino acid (EAA) into the lysosome, stimulating activation of proton-transporting vacuolar (V)-ATPase protein pump (V-ATPase) and hence mTORC1 activation. Plays a role as negative regulator of TGFB1 production in regulatory T cells. Binds ceramide and facilitates its exit from late endosome in order to control cell death pathways. This is Lysosomal-associated transmembrane protein 4B from Macaca fascicularis (Crab-eating macaque).